A 213-amino-acid polypeptide reads, in one-letter code: Phospho-2-dehydro-3-deoxyheptonate aldolase, Tyr-sensitive (213 aa).

It belongs to the class-I DAHP synthase family.

It catalyses the reaction D-erythrose 4-phosphate + phosphoenolpyruvate + H2O = 7-phospho-2-dehydro-3-deoxy-D-arabino-heptonate + phosphate. It functions in the pathway metabolic intermediate biosynthesis; chorismate biosynthesis; chorismate from D-erythrose 4-phosphate and phosphoenolpyruvate: step 1/7. Functionally, stereospecific condensation of phosphoenolpyruvate (PEP) and D-erythrose-4-phosphate (E4P) giving rise to 3-deoxy-D-arabino-heptulosonate-7-phosphate (DAHP). The sequence is that of Phospho-2-dehydro-3-deoxyheptonate aldolase, Tyr-sensitive (aroF) from Enterobacter agglomerans (Erwinia herbicola).